The following is a 340-amino-acid chain: MILSIESSCDDSSLALTRIEDAQLIAHFKISQEKHHSSYGGVVPELASRLHAENLPLLLERIKISLNKDFSKIKAIAITNQPGLSVTLIEGLMMAKALSLSLNLPLILEDHLRGHVYSLFINEKQTCMPLSVLLVSGGHSLILEARDYENIKIVATSLDDSFGESFDKVSKMLDLGYPGGPIVEKLALDYRHPNEPLMFPIPLKNSPNLAFSFSGLKNAVRLEVEKNAPNLNEAIKQKIGYHFQSAAIEHLIQQTKRYFKIKRPKIFGIVGGASQNLALRKAFENLCDAFDCKLVLAPLEFCSDNAAMIGRSSLEAYQKKRFVPLEKANISPRTLLKSFE.

Fe cation is bound by residues His-111 and His-115. Substrate contacts are provided by residues 134–138 (LVSGG), Asp-167, Gly-180, and Asn-276. Asp-304 is a binding site for Fe cation.

The protein belongs to the KAE1 / TsaD family. Requires Fe(2+) as cofactor.

The protein resides in the cytoplasm. It carries out the reaction L-threonylcarbamoyladenylate + adenosine(37) in tRNA = N(6)-L-threonylcarbamoyladenosine(37) in tRNA + AMP + H(+). Required for the formation of a threonylcarbamoyl group on adenosine at position 37 (t(6)A37) in tRNAs that read codons beginning with adenine. Is involved in the transfer of the threonylcarbamoyl moiety of threonylcarbamoyl-AMP (TC-AMP) to the N6 group of A37, together with TsaE and TsaB. TsaD likely plays a direct catalytic role in this reaction. The protein is tRNA N6-adenosine threonylcarbamoyltransferase of Helicobacter pylori (strain ATCC 700392 / 26695) (Campylobacter pylori).